The sequence spans 1052 residues: Protein HelA (1052 aa).

13 helical membrane passes run 14 to 34 (WFVLLFTLVIAILGVYNFQRL), 121 to 141 (LPPGVETTLGPISTGLGEIFM), 348 to 368 (GALLVCVILFLFLGNIRAALI), 369 to 389 (TAMVIPLSMLLTITGMVENQI), 393 to 413 (LMSLGALDFGLIVDGAVIIVE), 450 to 470 (SIFGVFIITVVYLPILTLTGV), 483 to 503 (IIALLASMLFALTFVPAAVAI), 537 to 557 (VVISAAVALVVVSLGIAFHLG), 878 to 898 (LQIVVPITLLGIFLLLFISFG), 903 to 923 (ALLVFTGIPLALTGGVFALWL), 934 to 954 (VGFIALSGVAVLNGLVMITFI), 979 to 999 (PVLMTALVASLGFVPMALATG), and 1011 to 1031 (VVIGGIISSTFLTLLVLPGLY).

Belongs to the resistance-nodulation-cell division (RND) (TC 2.A.6) family.

It localises to the cell inner membrane. Presumed to function with HelC and HelB in efflux of an unidentified substrate. This Legionella pneumophila protein is Protein HelA (helA).